A 588-amino-acid chain; its full sequence is Aspartate--tRNA ligase (588 aa).

Glu-177 contributes to the L-aspartate binding site. Residues Gln-201 to Lys-204 form an aspartate region. Residue Arg-223 coordinates L-aspartate. ATP is bound by residues Arg-223–Glu-225 and Gln-232. His-451 contributes to the L-aspartate binding site. Position 485 (Glu-485) interacts with ATP. Arg-492 is an L-aspartate binding site. Gly-537 to Arg-540 contributes to the ATP binding site.

This sequence belongs to the class-II aminoacyl-tRNA synthetase family. Type 1 subfamily. In terms of assembly, homodimer.

It localises to the cytoplasm. The catalysed reaction is tRNA(Asp) + L-aspartate + ATP = L-aspartyl-tRNA(Asp) + AMP + diphosphate. Functionally, catalyzes the attachment of L-aspartate to tRNA(Asp) in a two-step reaction: L-aspartate is first activated by ATP to form Asp-AMP and then transferred to the acceptor end of tRNA(Asp). The polypeptide is Aspartate--tRNA ligase (Staphylococcus saprophyticus subsp. saprophyticus (strain ATCC 15305 / DSM 20229 / NCIMB 8711 / NCTC 7292 / S-41)).